A 215-amino-acid chain; its full sequence is Protein C' (215 aa).

Disordered stretches follow at residues 12–34 (MPSF…SRSR) and 51–71 (SEGT…QALP). Residues 15–22 (FLKKILKL) are involved in self-degradation and in host STAT1 degradation. Residues 51-65 (SEGTEAGSTTPSTLP) show a composition bias toward polar residues.

The protein belongs to the respirovirus protein C family. As to quaternary structure, the different isoforms interact (via C-terminus) with unphosphorylated and phosphorylated human STAT1 (via N-terminus), favoring the formation of parallel STAT1 homodimers. The different isoforms do not interact with host STAT2. C protein interacts with L protein; this interaction has an inhibitory effect on viral transcription and replication. Post-translationally, Y1 and Y2 proteins are produced not only by alternative initiation, but also by proteolytic cleavage of C'. Only alternative initiation is detected in vitro, whereas in vivo cleavage seems to be predominant.

Its subcellular location is the host cytoplasm. Functionally, the different products prevent the establishment of cellular antiviral state by blocking the interferon-alpha/beta (IFN-alpha/beta) and IFN-gamma signaling pathways. They inhibit IFN-alpha/beta induced tyrosine phosphorylation of STAT1 and STAT2. Blocking the IFN-alpha/beta pathway requires binding to STAT1 in the cytoplasm. They inhibit IFN-gamma induced serine phosphorylation of STAT1. Block the IFN-gamma pathway by binding to and stabilizing the parallel form of the STAT1 dimer, further inducing high-molecular-weight complex formation and inhibition of transcription by IFN-gamma. May also have a role in preventing the cell to enter apoptosis. Modulate regulation of viral transcription and replication. Overexpression inhibits the viral RNA polymerase. The absence of all C', C, Y1 and Y2 proteins leads to viral delayed growth. Plays an important role in virion particles release. Modulates virion shape. The protein is Protein C' (P/V/C) of Sendai virus (strain Harris) (SeV).